Here is a 354-residue protein sequence, read N- to C-terminus: Lipoyl synthase, mitochondrial (354 aa).

[4Fe-4S] cluster contacts are provided by Cys91, Cys96, Cys102, Cys122, Cys126, Cys129, and Ser337. A Radical SAM core domain is found at Asp107–Leu326.

This sequence belongs to the radical SAM superfamily. Lipoyl synthase family. The cofactor is [4Fe-4S] cluster.

The protein resides in the mitochondrion. The enzyme catalyses [[Fe-S] cluster scaffold protein carrying a second [4Fe-4S](2+) cluster] + N(6)-octanoyl-L-lysyl-[protein] + 2 oxidized [2Fe-2S]-[ferredoxin] + 2 S-adenosyl-L-methionine + 4 H(+) = [[Fe-S] cluster scaffold protein] + N(6)-[(R)-dihydrolipoyl]-L-lysyl-[protein] + 4 Fe(3+) + 2 hydrogen sulfide + 2 5'-deoxyadenosine + 2 L-methionine + 2 reduced [2Fe-2S]-[ferredoxin]. Its pathway is protein modification; protein lipoylation via endogenous pathway; protein N(6)-(lipoyl)lysine from octanoyl-[acyl-carrier-protein]: step 2/2. In terms of biological role, catalyzes the radical-mediated insertion of two sulfur atoms into the C-6 and C-8 positions of the octanoyl moiety bound to the lipoyl domains of lipoate-dependent enzymes, thereby converting the octanoylated domains into lipoylated derivatives. The chain is Lipoyl synthase, mitochondrial from Caenorhabditis elegans.